Here is a 330-residue protein sequence, read N- to C-terminus: Aspartate--ammonia ligase (330 aa).

It belongs to the class-II aminoacyl-tRNA synthetase family. AsnA subfamily.

It is found in the cytoplasm. It catalyses the reaction L-aspartate + NH4(+) + ATP = L-asparagine + AMP + diphosphate + H(+). The protein operates within amino-acid biosynthesis; L-asparagine biosynthesis; L-asparagine from L-aspartate (ammonia route): step 1/1. This chain is Aspartate--ammonia ligase, found in Haemophilus ducreyi (strain 35000HP / ATCC 700724).